Here is a 33-residue protein sequence, read N- to C-terminus: Photosystem II reaction center protein Psb30 (33 aa).

The chain crosses the membrane as a helical span at residues isoleucine 7 to phenylalanine 27.

The protein belongs to the Psb30/Ycf12 family. PSII is composed of 1 copy each of membrane proteins PsbA, PsbB, PsbC, PsbD, PsbE, PsbF, PsbH, PsbI, PsbJ, PsbK, PsbL, PsbM, PsbT, PsbY, PsbZ, Psb30/Ycf12, peripheral proteins of the oxygen-evolving complex and a large number of cofactors. It forms dimeric complexes.

It localises to the plastid. The protein resides in the chloroplast thylakoid membrane. Its function is as follows. A core subunit of photosystem II (PSII), probably helps stabilize the reaction center. This Euglena gracilis protein is Photosystem II reaction center protein Psb30.